Consider the following 163-residue polypeptide: Crossover junction endodeoxyribonuclease RuvC (163 aa).

Residues D4, E65, and D138 contribute to the active site. Residues D4, E65, and D138 each coordinate Mg(2+).

It belongs to the RuvC family. As to quaternary structure, homodimer which binds Holliday junction (HJ) DNA. The HJ becomes 2-fold symmetrical on binding to RuvC with unstacked arms; it has a different conformation from HJ DNA in complex with RuvA. In the full resolvosome a probable DNA-RuvA(4)-RuvB(12)-RuvC(2) complex forms which resolves the HJ. Mg(2+) is required as a cofactor.

Its subcellular location is the cytoplasm. It carries out the reaction Endonucleolytic cleavage at a junction such as a reciprocal single-stranded crossover between two homologous DNA duplexes (Holliday junction).. In terms of biological role, the RuvA-RuvB-RuvC complex processes Holliday junction (HJ) DNA during genetic recombination and DNA repair. Endonuclease that resolves HJ intermediates. Cleaves cruciform DNA by making single-stranded nicks across the HJ at symmetrical positions within the homologous arms, yielding a 5'-phosphate and a 3'-hydroxyl group; requires a central core of homology in the junction. The consensus cleavage sequence is 5'-(A/T)TT(C/G)-3'. Cleavage occurs on the 3'-side of the TT dinucleotide at the point of strand exchange. HJ branch migration catalyzed by RuvA-RuvB allows RuvC to scan DNA until it finds its consensus sequence, where it cleaves and resolves the cruciform DNA. The protein is Crossover junction endodeoxyribonuclease RuvC of Corynebacterium jeikeium (strain K411).